We begin with the raw amino-acid sequence, 233 residues long: 7-cyano-7-deazaguanine synthase (233 aa).

7 to 17 provides a ligand contact to ATP; sequence LSGGLDSAVTS. Zn(2+) contacts are provided by C195, C206, C209, and C212.

The protein belongs to the QueC family. The cofactor is Zn(2+).

The catalysed reaction is 7-carboxy-7-deazaguanine + NH4(+) + ATP = 7-cyano-7-deazaguanine + ADP + phosphate + H2O + H(+). Its pathway is purine metabolism; 7-cyano-7-deazaguanine biosynthesis. In terms of biological role, catalyzes the ATP-dependent conversion of 7-carboxy-7-deazaguanine (CDG) to 7-cyano-7-deazaguanine (preQ(0)). This is 7-cyano-7-deazaguanine synthase from Methanococcus maripaludis (strain DSM 14266 / JCM 13030 / NBRC 101832 / S2 / LL).